The following is a 678-amino-acid chain: uncharacterized protein (678 aa).

2 helical membrane-spanning segments follow: residues 14-34 (LMFAGAGPGPMLAAASAWTGL) and 180-200 (GAVIIAGFPFLDLGNVTIGGF).

The protein belongs to the mycobacterial PPE family.

Its subcellular location is the cell membrane. This is an uncharacterized protein from Mycobacterium tuberculosis (strain CDC 1551 / Oshkosh).